The chain runs to 217 residues: MPETEKPLFGHPWIFIRGVPSLNFLPPEGPLEVAFAGRSNVGKSSLINALVGQKGLARTSNTPGRTQELNYFVPDGYSGEGGDLPPTAIVDMPGYGYAQAPKEQVDKWTKLVFDYLRGRATLKRVYVLIDSRHGIKKNDDDVLDLLDKAAVSYQIVLTKTDKIKAAGVPKLLAETAEKIRKRPAAYPGVLSTSSEKGDGLDELRQAIAETVGIARWK.

In terms of domain architecture, EngB-type G spans 29–213; the sequence is GPLEVAFAGR…RQAIAETVGI (185 aa). GTP contacts are provided by residues 37 to 44, 64 to 68, 91 to 94, 158 to 161, and 192 to 194; these read GRSNVGKS, GRTQE, DMPG, TKTD, and TSS. Mg(2+) is bound by residues serine 44 and threonine 66.

Belongs to the TRAFAC class TrmE-Era-EngA-EngB-Septin-like GTPase superfamily. EngB GTPase family. Mg(2+) serves as cofactor.

Necessary for normal cell division and for the maintenance of normal septation. The chain is Probable GTP-binding protein EngB from Rhizobium johnstonii (strain DSM 114642 / LMG 32736 / 3841) (Rhizobium leguminosarum bv. viciae).